Reading from the N-terminus, the 240-residue chain is MAALRRMLHLPSLMMGTCRPFAGSLADSCLADRCLWDRLHAQPRLGTVPTFDWFFGYDEVQGLLLPLLQEAQAASPLRVLDVGCGTSSLCTGLYTKSPHPVDVLGVDFSPVAVAHMNSLLEGGPGQTPLCPGHPASSLHFMHADAQNLGAVASSGSFQLLLDKGTWDAVARGGLPRAYQLLSECLRVLNPQGTLIQFSDEDPDVRLPCLEQGSYGWTVTVQELGPFRGITYFAYLIQGSH.

The N-terminal 28 residues, 1-28 (MAALRRMLHLPSLMMGTCRPFAGSLADS), are a transit peptide targeting the mitochondrion.

The protein belongs to the methyltransferase superfamily.

It localises to the mitochondrion. The enzyme catalyses L-lysyl-[citrate synthase] + S-adenosyl-L-methionine = N(6)-methyl-L-lysyl-[citrate synthase] + S-adenosyl-L-homocysteine + H(+). It catalyses the reaction N(6)-methyl-L-lysyl-[citrate synthase] + S-adenosyl-L-methionine = N(6),N(6)-dimethyl-L-lysyl-[citrate synthase] + S-adenosyl-L-homocysteine + H(+). It carries out the reaction N(6),N(6)-dimethyl-L-lysyl-[citrate synthase] + S-adenosyl-L-methionine = N(6),N(6),N(6)-trimethyl-L-lysyl-[citrate synthase] + S-adenosyl-L-homocysteine + H(+). With respect to regulation, citrate synthase-lysine methyltransferase activity is inhibited by S-adenosylhomocysteine (AdoHcy) and oxaloacetate (OAA). Functionally, protein-lysine methyltransferase that selectively trimethylates citrate synthase (CS) in mitochondria. Seems to conduct trimethylation in a highly distributive manner rather than in a processive manner, and thus introduces a single methyl group per binding event. The sequence is that of Citrate synthase-lysine N-methyltransferase CSKMT, mitochondrial from Homo sapiens (Human).